The following is a 432-amino-acid chain: Probable anion transporter 5 (432 aa).

An N-terminal signal peptide occupies residues 1-23 (MKLSNIPQRYVIVFLTFLSTCVC). Transmembrane regions (helical) follow at residues 50–70 (TILS…GWAA), 78–98 (VLLL…LDPN), 101–121 (GLLV…FPSI), 140–160 (ITTS…PALV), 164–184 (GPES…LLWI), 229–249 (LPVW…YVLM), 273–293 (VPYL…DYLI), 305–325 (KFLN…LPMF), 331–351 (VILC…GFAV), 360–380 (YAGI…IIGV), and 405–425 (VVFF…LLFS).

Belongs to the major facilitator superfamily. Sodium/anion cotransporter (TC 2.A.1.14) family. Ubiquitous.

The protein resides in the golgi apparatus membrane. Inorganic phosphate and probable anion transporter. The protein is Probable anion transporter 5 (ANTR5) of Arabidopsis thaliana (Mouse-ear cress).